The primary structure comprises 581 residues: Jasmonoyl--L-amino acid synthetase GH3.5 (581 aa).

ATP is bound at residue serine 92. Serine 95 contributes to the jasmonate binding site. Residues threonine 115, asparagine 161, and 324-329 (GASEGW) contribute to the ATP site. Residue 159–163 (TTNLY) coordinates an L-alpha-amino acid. Jasmonate-binding positions include 321–324 (ADYG) and serine 326. 534–538 (EILDH) is a binding site for an L-alpha-amino acid. Lysine 561 is an ATP binding site.

This sequence belongs to the IAA-amido conjugating enzyme family. Expressed in green shoots, roots and flowers.

The enzyme catalyses a jasmonate + an L-alpha-amino acid + ATP = a jasmonyl-L-amino acid + AMP + diphosphate + H(+). Functionally, catalyzes the synthesis of jasmonate-amino acid conjugates by adenylation. Catalyzes the conjugation of jasmonate (JA) to Ile when expressed in a heterologous system (E.coli). Catalyzes in vitro the conjugation of jasmonate (JA) to Ile, Phe, Cys, Leu, Met, Ala, Val and Trp. Involved in the production of JA-Ile in response to infection by the rice blast fungus Magnaporthe oryzae. Required for the accumulation of the flavonoid phytoalexin sakuranetin in response to infection by the rice blast fungus. Involved in herbivory-induced JA-Ile accumulation. Involved in the production of JA-Ile in response to wounding. Required for modulation of light and JA signaling in photomorphogenesis. Required for normal seed development. Required for optimal flower opening and closing and anther dehiscence. May catalyze the synthesis of indole-3-acetic acid (IAA)-amino acid conjugates, providing a mechanism for the plant to cope with the presence of excess auxin. The chain is Jasmonoyl--L-amino acid synthetase GH3.5 from Oryza sativa subsp. japonica (Rice).